Reading from the N-terminus, the 87-residue chain is HssA/B-like protein 58 (87 aa).

A compositionally biased stretch (polar residues) spans 1–13 (MTILSAITSISRP). A disordered region spans residues 1 to 31 (MTILSAITSISRPNKSSKSVISSNGGSSLSM). Residues 14-31 (NKSSKSVISSNGGSSLSM) are compositionally biased toward low complexity.

It belongs to the hssA/B family.

The sequence is that of HssA/B-like protein 58 (hssl58) from Dictyostelium discoideum (Social amoeba).